We begin with the raw amino-acid sequence, 505 residues long: Poxin-Schlafen (505 aa).

Residues 1–238 (MAMFYAHAFG…SKEERVDYVL (238 aa)) form a poxin-like region. H17 serves as the catalytic Proton donor. The Shared with catalytic histidine of dimeric partner role is filled by Y138. Catalysis depends on K142, which acts as the Proton acceptor; shared with catalytic histidine of dimeric partner. The segment at 239–505 (MKRLESIRHL…PDEWVSHIKF (267 aa)) is schlafen-like.

In the N-terminal section; belongs to the poxin family. The protein in the C-terminal section; belongs to the Schlafen protein family. Subgroup poxviridae B3 subfamily. As to quaternary structure, homodimer.

It carries out the reaction 2',3'-cGAMP + H2O = Gp(2'-5')Ap(3') + H(+). Functionally, nuclease that is responsible for viral evasion of host cGAS-STING innate immunity. Cleaves 2',3'-cGAMP which is produced by host cGAS following recognition of cytosolic DNA and blocks the subsequent 2',3'-cGAMP-mediated activation of TMEM173/STING, which normally spreads to adjacent cells and activates the interferon and NF-kappa-B immune responses. This Bos taurus (Bovine) protein is Poxin-Schlafen (OPG188).